Reading from the N-terminus, the 913-residue chain is Polyribonucleotide nucleotidyltransferase (913 aa).

The disordered stretch occupies residues 407-427 (YMHNYEMPPYSTGETGRVGSP). Mg(2+)-binding residues include aspartate 521 and aspartate 527. In terms of domain architecture, KH spans 587–646 (PRIITTSVPVEKIGEVIGPKGKMINQIQEDTGAEIAIEDDGTVFISSEGGEAAEKAKAII). The S1 motif domain occupies 658–730 (GETYNGKVVK…DRGKISLAIP (73 aa)). Residues 727–913 (LAIPGFEDQE…VRRDFDPFED (187 aa)) are disordered. Composition is skewed to basic and acidic residues over residues 742-789 (SRGD…RRSD), 797-865 (DRPR…DRRG), and 872-898 (RGSD…ERTE).

Belongs to the polyribonucleotide nucleotidyltransferase family. Mg(2+) serves as cofactor.

It is found in the cytoplasm. The catalysed reaction is RNA(n+1) + phosphate = RNA(n) + a ribonucleoside 5'-diphosphate. In terms of biological role, involved in mRNA degradation. Catalyzes the phosphorolysis of single-stranded polyribonucleotides processively in the 3'- to 5'-direction. In Bifidobacterium longum (strain DJO10A), this protein is Polyribonucleotide nucleotidyltransferase.